The chain runs to 181 residues: Succinate dehydrogenase [ubiquinone] cytochrome b small subunit, mitochondrial (181 aa).

Residues Met1–Ser31 constitute a mitochondrion transit peptide. Topologically, residues Leu32–Ser66 are mitochondrial matrix. The helical transmembrane segment at Tyr67–Leu88 threads the bilayer. Topologically, residues Thr89–Asp98 are mitochondrial intermembrane. The chain crosses the membrane as a helical span at residues Ser99–Thr118. Cys109 serves as a coordination point for heme. The Mitochondrial matrix segment spans residues Asp119 to Gly127. Tyr120 lines the a ubiquinone pocket. Residues Val128 to Ile148 form a helical membrane-spanning segment. Residues Tyr149–Lys181 lie on the Mitochondrial intermembrane side of the membrane.

It belongs to the CybS family. In terms of assembly, forms part of complex II containing four subunits: a flavoprotein (FP), an iron-sulfur protein (IP) and a cytochrome b composed of a large and a small subunit.

It localises to the mitochondrion inner membrane. It functions in the pathway carbohydrate metabolism; tricarboxylic acid cycle. Its function is as follows. Membrane-anchoring subunit of succinate dehydrogenase (SDH) that is involved in system II of the mitochondrial electron transport chain and is responsible for transferring electrons from succinate to ubiquinone (coenzyme Q). SDH3 and SDH4 form the membrane dimer that anchors the catalytic dimer formed by SDH1 and SDH2 to the matrix surface of the mitochondrial inner membrane. Electrons originating from the catalytic dimer enter the membrane dimer for ubiquinone reduction. This is Succinate dehydrogenase [ubiquinone] cytochrome b small subunit, mitochondrial (SDH4) from Saccharomyces cerevisiae (strain ATCC 204508 / S288c) (Baker's yeast).